Consider the following 576-residue polypeptide: MAGUK p55 subfamily member 7 (576 aa).

2 consecutive L27 domains span residues 10-65 (SDTG…KQSP) and 67-122 (PILH…YDPV). Residues 139–220 (IIRLVKNREP…AITFKIIPGS (82 aa)) enclose the PDZ domain. An SH3 domain is found at 228–298 (EGKMFIKALF…PSKHFQERRL (71 aa)). The tract at residues 289 to 383 (PSKHFQERRL…VGPVGVGLNE (95 aa)) is phospho-regulated basic and hydrophobic (PRBH) motif. In terms of domain architecture, Guanylate kinase-like spans 368–560 (YRLVVLVGPV…AFNELKTTFD (193 aa)). Ser-409 carries the post-translational modification Phosphoserine.

This sequence belongs to the MAGUK family. As to quaternary structure, heterodimer; able to heterodimerize via its C-terminal L27 domain with LIN7A, LIN7B and LIN7C. Forms a tripartite complex composed of DLG1, MPP7 and LIN7 (LIN7A or LIN7C). Interacts with DLG1 via its N-terminal L27 domain. Interacts with PALS1 and PATJ. Phosphorylated by aPKC which promotes dissociation from the cell cortex.

Its subcellular location is the membrane. The protein resides in the lateral cell membrane. The protein localises to the cell junction. It localises to the tight junction. It is found in the adherens junction. Its subcellular location is the cytoplasm. The protein resides in the cell cortex. Its function is as follows. Acts as an important adapter that promotes epithelial cell polarity and tight junction formation via its interaction with DLG1. Involved in the assembly of protein complexes at sites of cell-cell contact. This is MAGUK p55 subfamily member 7 (MPP7) from Homo sapiens (Human).